The following is a 437-amino-acid chain: Probable glycine dehydrogenase (decarboxylating) subunit 1 (437 aa).

Belongs to the GcvP family. N-terminal subunit subfamily. In terms of assembly, the glycine cleavage system is composed of four proteins: P, T, L and H. In this organism, the P 'protein' is a heterodimer of two subunits.

It carries out the reaction N(6)-[(R)-lipoyl]-L-lysyl-[glycine-cleavage complex H protein] + glycine + H(+) = N(6)-[(R)-S(8)-aminomethyldihydrolipoyl]-L-lysyl-[glycine-cleavage complex H protein] + CO2. Functionally, the glycine cleavage system catalyzes the degradation of glycine. The P protein binds the alpha-amino group of glycine through its pyridoxal phosphate cofactor; CO(2) is released and the remaining methylamine moiety is then transferred to the lipoamide cofactor of the H protein. This chain is Probable glycine dehydrogenase (decarboxylating) subunit 1, found in Thermotoga maritima (strain ATCC 43589 / DSM 3109 / JCM 10099 / NBRC 100826 / MSB8).